A 59-amino-acid polypeptide reads, in one-letter code: MSDVNAHLLAQRIDTVLDILVAGDYHSAIHNLEILKAELLALAADDAEQKNQPKAPWEI.

Belongs to the UPF0509 family.

This is UPF0509 protein KPK_3153 from Klebsiella pneumoniae (strain 342).